A 160-amino-acid polypeptide reads, in one-letter code: Invasion protein IagB (160 aa).

A signal peptide spans 1–19 (MHYFFIIVIWLLSINTAWA).

Belongs to the IagB/IpgF/P19 family.

The protein is Invasion protein IagB (iagB) of Salmonella typhi.